Consider the following 120-residue polypeptide: Large ribosomal subunit protein uL18 (120 aa).

The protein belongs to the universal ribosomal protein uL18 family. As to quaternary structure, part of the 50S ribosomal subunit; part of the 5S rRNA/L5/L18 subcomplex. In B.stearothermophilus only 2 proteins, L5 and L18 have been shown to be part of this subcomplex, unlike the case in E.coli and T.thermophilus where L25 (TL5) is also found. The protein, when overexpressed in E.coli, contains a phosphoserine, which is required for the protein to bind to 5S rRNA. It has been suggested, based solely on amino acid conservation, that this occurs on Ser-57.

Functionally, this is one of the proteins that bind and probably mediate the attachment of the 5S RNA into the large ribosomal subunit, where it forms part of the central protuberance. This is Large ribosomal subunit protein uL18 (rplR) from Geobacillus stearothermophilus (Bacillus stearothermophilus).